We begin with the raw amino-acid sequence, 221 residues long: Probable septum site-determining protein MinC (221 aa).

It belongs to the MinC family. Interacts with MinD and FtsZ.

In terms of biological role, cell division inhibitor that blocks the formation of polar Z ring septums. Rapidly oscillates between the poles of the cell to destabilize FtsZ filaments that have formed before they mature into polar Z rings. Prevents FtsZ polymerization. In Shewanella loihica (strain ATCC BAA-1088 / PV-4), this protein is Probable septum site-determining protein MinC.